A 185-amino-acid polypeptide reads, in one-letter code: Tetratricopeptide repeat protein 36 homolog (185 aa).

TPR repeat units follow at residues 53–86, 88–119, and 125–158; these read SREL…AQRA, VLNN…ANDQ, and CHAH…GSKF.

This sequence belongs to the TTC36 family.

This is Tetratricopeptide repeat protein 36 homolog from Drosophila melanogaster (Fruit fly).